The sequence spans 305 residues: Aspartate carbamoyltransferase catalytic subunit (305 aa).

Carbamoyl phosphate contacts are provided by Arg54 and Thr55. Lys82 is a binding site for L-aspartate. Residues Arg104, His132, and Gln135 each coordinate carbamoyl phosphate. The L-aspartate site is built by Arg165 and Arg218. Carbamoyl phosphate is bound by residues Gly259 and Pro260.

Belongs to the aspartate/ornithine carbamoyltransferase superfamily. ATCase family. Heterododecamer (2C3:3R2) of six catalytic PyrB chains organized as two trimers (C3), and six regulatory PyrI chains organized as three dimers (R2).

It carries out the reaction carbamoyl phosphate + L-aspartate = N-carbamoyl-L-aspartate + phosphate + H(+). Its pathway is pyrimidine metabolism; UMP biosynthesis via de novo pathway; (S)-dihydroorotate from bicarbonate: step 2/3. Functionally, catalyzes the condensation of carbamoyl phosphate and aspartate to form carbamoyl aspartate and inorganic phosphate, the committed step in the de novo pyrimidine nucleotide biosynthesis pathway. In Caldicellulosiruptor bescii (strain ATCC BAA-1888 / DSM 6725 / KCTC 15123 / Z-1320) (Anaerocellum thermophilum), this protein is Aspartate carbamoyltransferase catalytic subunit.